The following is a 349-amino-acid chain: DNA replication and repair protein RecF (349 aa).

30-37 (GKNGSGKT) is an ATP binding site.

Belongs to the RecF family.

Its subcellular location is the cytoplasm. The RecF protein is involved in DNA metabolism; it is required for DNA replication and normal SOS inducibility. RecF binds preferentially to single-stranded, linear DNA. It also seems to bind ATP. In Francisella tularensis subsp. mediasiatica (strain FSC147), this protein is DNA replication and repair protein RecF.